The following is a 92-amino-acid chain: MARKCEITGKKTMFGNNVPRKGLAKKKGGAGQHIGVKTKRTFKVNLINKKFFIPNLGRSVSIKVSANALRSISKIGLDAFLKKNCKKIENFL.

This sequence belongs to the bacterial ribosomal protein bL28 family.

The polypeptide is Large ribosomal subunit protein bL28 (Borreliella burgdorferi (strain ATCC 35210 / DSM 4680 / CIP 102532 / B31) (Borrelia burgdorferi)).